Consider the following 66-residue polypeptide: UPF0337 protein SAG0606 (66 aa).

The segment covering 1–10 has biased composition (basic and acidic residues); sequence MSQEKLKSKV. The interval 1-23 is disordered; it reads MSQEKLKSKVEQASGSLKEGAGK.

This sequence belongs to the UPF0337 (CsbD) family.

The chain is UPF0337 protein SAG0606 from Streptococcus agalactiae serotype V (strain ATCC BAA-611 / 2603 V/R).